A 305-amino-acid polypeptide reads, in one-letter code: MTDRIAAVKTYLLDLQDRICAALEAEDGKARFAEDAWERPAGGGGRTRVIGDGALIEKGGVNFSHVFGDSLPPSASAHRPELAGRGFQALGVSLVIHPENPHVPTSHANVRFFCAEKEGEEPVWWFGGGFDLTPYYAHEEDCVHWHRVARDACAPFGADVYPRYKEWCDRYFHLKHRNEPRGIGGLFFDDLNQWDFDTCFAFIRAIGDAYIDAYLPIVQRRKHTPFDERQREFQAYRRGRYVEFNLVFDRGTLFGLQSGGRTESILMSLPPQVRWGYDWKPEPGSEEARLTEYFLADRDWLAGQP.

Residue Ser-93 participates in substrate binding. 2 residues coordinate a divalent metal cation: His-97 and His-107. His-107 functions as the Proton donor in the catalytic mechanism. 109 to 111 (NVR) is a substrate binding site. A divalent metal cation-binding residues include His-146 and His-176. The tract at residues 241–276 (YVEFNLVFDRGTLFGLQSGGRTESILMSLPPQVRWG) is important for dimerization. 259 to 261 (GGR) is a binding site for substrate.

The protein belongs to the aerobic coproporphyrinogen-III oxidase family. Homodimer. The cofactor is a divalent metal cation.

The protein resides in the cytoplasm. It catalyses the reaction coproporphyrinogen III + O2 + 2 H(+) = protoporphyrinogen IX + 2 CO2 + 2 H2O. It participates in porphyrin-containing compound metabolism; protoporphyrin-IX biosynthesis; protoporphyrinogen-IX from coproporphyrinogen-III (O2 route): step 1/1. Its function is as follows. Involved in the heme biosynthesis. Catalyzes the aerobic oxidative decarboxylation of propionate groups of rings A and B of coproporphyrinogen-III to yield the vinyl groups in protoporphyrinogen-IX. The sequence is that of Oxygen-dependent coproporphyrinogen-III oxidase from Pseudomonas aeruginosa (strain UCBPP-PA14).